The sequence spans 142 residues: 3-hydroxyacyl-[acyl-carrier-protein] dehydratase FabZ (142 aa).

H48 is a catalytic residue.

This sequence belongs to the thioester dehydratase family. FabZ subfamily.

The protein resides in the cytoplasm. It catalyses the reaction a (3R)-hydroxyacyl-[ACP] = a (2E)-enoyl-[ACP] + H2O. Involved in unsaturated fatty acids biosynthesis. Catalyzes the dehydration of short chain beta-hydroxyacyl-ACPs and long chain saturated and unsaturated beta-hydroxyacyl-ACPs. The sequence is that of 3-hydroxyacyl-[acyl-carrier-protein] dehydratase FabZ from Natranaerobius thermophilus (strain ATCC BAA-1301 / DSM 18059 / JW/NM-WN-LF).